The sequence spans 405 residues: NAC transcription factor NAM-A1 (405 aa).

Low complexity predominate over residues 1 to 10; it reads MGSSDSSSGS. The tract at residues 1–38 is disordered; it reads MGSSDSSSGSAQKAARHQHEPPPPRQRGSAPELPPGFR. The 172-residue stretch at 33–204 folds into the NAC domain; the sequence is LPPGFRFHPT…DWVLCRIYKK (172 aa). Residues 137–210 mediate DNA binding; the sequence is LGVKKALVFY…IYKKINKAAA (74 aa).

Expressed in flag leaves, green spikes and peduncles.

It localises to the nucleus. Its function is as follows. Transcription factor of the NAC family associated with the grain protein content (GPC). Accelerates senescence and increases nutrient remobilization from leaves to developing grains. The tetraploid cultivated wheat (T.durum) contains one additional gene coding for a functional protein (NAM-B2) and one extra pseudogene (NAM-B1). The polypeptide is NAC transcription factor NAM-A1 (NAM-A1) (Triticum turgidum subsp. durum (Durum wheat)).